The sequence spans 566 residues: MSEELHSDLIASIFGGKPAKIEEFFSKWNFANAAVSKFDMANSAKNELGDRICEVIENGELTHVLLETIKILSREKDGLEGLLNDPLCDKILAFAELSSNENNSKTVHTLMEAQKCLINTLFHSQRMRDRFYANPKTGENLQFFLGEFEENRRKTSSIDWIRLLNPVQAAEIWYFYHRIAFIATALGREFQKNWANDPKTIDSLLLAVEICTNRSENSTQDINRATEALKTFFNVFCHFHGDVKAIDHKNAAKTCQILRDAICSDVLTDDVVQSAIHCLSVPPLPMVLSVLCGKNSKNNGGENEEEKFFVEELSNMQLTEAILMHLDKQLTKVVALLLNDAPNQQQNPMLSAEASTLTDLVGPYFQVLARLCTDSKYVRRYCRIRVIPPLVSEEVQKRPEENNTLRGRIARIMMLPSSTKDVAAEFLFIICKRSVNRMIKYLGFGHSAGHLANLGLLGQINQPKHASDSEDSETEDYNQIKDSVNPVTGAIYPSDHGSALAGMSEEQKEYEAMKLVDAMNQMMETGIVKPGTIGDDGKIREVSHVLELLKNAPEPAPAENSDSDEE.

The protein belongs to the synembryn family. Interacts with GDP-bound G-alpha proteins goa-1 and gpa-16. Does not interact with G-alpha proteins when they are in complex with subunits beta and gamma. Present throughout the nervous system in juveniles and adults (at protein level).

The protein localises to the cytoplasm. It is found in the cell cortex. In terms of biological role, chaperone that specifically binds and folds some, but not all, nascent G alpha proteins prior to G protein heterotrimer formation, promoting their stability and activity. Also acts as a guanine nucleotide exchange factor (GEF) for G alpha proteins by stimulating exchange of bound GDP for free GTP. Able to facilitate synaptic transmission in the nervous system probably by activating G(q)-alpha (egl-30). Also able to activate the G(s)-alpha in synaptic signaling network. Plays a key role in asymmetric spindle positioning, a step for asymmetric cell division that generates cell diversity during development by activating G(i)-alpha protein goa-1 and gpa-16 independently of G-protein coupled receptors. While it acts as a GEF for goa-1, it has no GEF activity toward gpa-16. In addition to its GEF activity, it is required for cortical subcellular localization of G-alpha proteins such as gpa-16. Also required for the interaction of goa-1 and gpr-1/2, suggesting that it may act by generating G-alpha proteins free from G-beta-gamma subunits, enabling gpr-1/2 to mediate asymmetric cell division. This chain is Chaperone ric-8 (ric-8), found in Caenorhabditis elegans.